The following is a 256-amino-acid chain: V-type proton ATPase subunit D (256 aa).

Basic and acidic residues predominate over residues 211 to 230 (QNETAKLDAEMKLKRDRAEQ). Residues 211–256 (QNETAKLDAEMKLKRDRAEQDASEVAADEEPQGETLVADQEDDVIF) are disordered.

The protein belongs to the V-ATPase D subunit family. In terms of assembly, V-ATPase is a heteromultimeric enzyme composed of a peripheral catalytic V1 complex (components A to H) attached to an integral membrane V0 proton pore complex (components: a, c, c', c'', d, e, f and VOA1). Interacts with RAV1 and RAV2 components of the RAVE complex, which are essential for the stability and assembly of V-ATPase.

It is found in the vacuole membrane. Its function is as follows. Subunit of the V1 complex of vacuolar(H+)-ATPase (V-ATPase), a multisubunit enzyme composed of a peripheral complex (V1) that hydrolyzes ATP and a membrane integral complex (V0) that translocates protons. V-ATPase is responsible for acidifying and maintaining the pH of intracellular compartments. The polypeptide is V-type proton ATPase subunit D (Saccharomyces cerevisiae (strain ATCC 204508 / S288c) (Baker's yeast)).